We begin with the raw amino-acid sequence, 378 residues long: MAKTRVAVLYGGKADEHSISCISAASFMRALDPELFEAVPIGITKTGTWFVDGQDPLGWNLAEGLPEAVETPDSREVVLTIGDGGDGFHARNADGSLDSLGHIDVVLPALHGPFGEDGTIQGLFEMMGVPYVGCGVLASAACMDKHYTKVLLRAAGIPVAPGITLDTRHYDASDEFATDGEEFLRQVNEAGLQYPLFVKPSRAGSSFGVTKVEQIGDAAALAAAVFEASRHDWRVLVEQGIDAREIECAVVRIHPTDPTRAALPGEVVLDRRSEGDDQFYDFDSKYMDSQASHTEIPAKIGDDLIARVRETAVRAFDAVDGMGLSRVDTFVTADGDVLVNEINTLPGCTSISMFPQAWEAMGIPFRTVVTDLIEGALA.

Residues 149-374 (KVLLRAAGIP…FRTVVTDLIE (226 aa)) enclose the ATP-grasp domain. Position 189–247 (189–247 (EAGLQYPLFVKPSRAGSSFGVTKVEQIGDAAALAAAVFEASRHDWRVLVEQGIDAREIE)) interacts with ATP. Residues D328, E341, and N343 each coordinate Mg(2+).

Belongs to the D-alanine--D-alanine ligase family. The cofactor is Mg(2+). It depends on Mn(2+) as a cofactor.

The protein resides in the cytoplasm. It catalyses the reaction 2 D-alanine + ATP = D-alanyl-D-alanine + ADP + phosphate + H(+). It participates in cell wall biogenesis; peptidoglycan biosynthesis. Its function is as follows. Cell wall formation. This chain is D-alanine--D-alanine ligase, found in Bifidobacterium animalis subsp. lactis (strain AD011).